The following is a 122-amino-acid chain: MGFHFCIWIIFLLPPPCKKCLSPPTMNLRPPKSCGNVFYWVLVLNSGLLYKFCQTIKCRANWRPARAPRGWNEATERHQERRTQMETEMGGISTTYWHRLCTCTDRRAEKLVMDGNNCWFHK.

An N-terminal signal peptide occupies residues 1–20 (MGFHFCIWIIFLLPPPCKKC).

The protein localises to the secreted. This is an uncharacterized protein from Homo sapiens (Human).